The following is a 1486-amino-acid chain: MAYSWQTDPNPNESHEKQYEHQEFLFVNQPHSSSQVSLGFDQIVDEISGKIPHYESEIDENTFFVPTAPKWDSTGHSLNEAHQISLNEFTSKSRELSWHQVSKAPAIGFSPSVLPKPQNTNKECSWGSPIGKHHGADDSRFSILAPSFTSLDKINLEKELENENHNYHIGFESSIPPTNSSFSSDFMPKEENKRSGHVNIVEPSLMLLKGSLQPGMWESTWQKNIESIGCSIQLVEVPQSSNTSLASFCNKVKKIRERYHAADVNFNSGKIWSTTTAFPYQLFSKTKFNIHIFIDNSTQPLHFMPCANYLVKDLIAEILHFCTNDQLLPKDHILSVCGSEEFLQNDHCLGSHKMFQKDKSVIQLHLQKSREAPGKLSRKHEEDHSQFYLNQLLEFMHIWKVSRQCLLTLIRKYDFHLKYLLKTQENVYNIIEEVKKICSVLGCVETKQITDAVNELSLILQRKGENFYQSSETSAKGLIEKVTTELSTSIYQLINVYCNSFYADFQPVNVPRCTSYLNPGLPSHLSFTVYAAHNIPETWVHSYKAFSFTCWLTYAGKKLCQVRNYRNIPDKKLFFFLVNWNETINFPLEIKSLPRESMLTVKLFGIACATNNANLLAWTCLPLFPKEKSILGSMLFSMTLQSEPPVEMITPGVWDVSQPSPVTLQIDFPATGWEYMKPDSEENRSNLEEPLKECIKHIARLSQKQTPLLLSEEKKRYLWFYRFYCNNENCSLPLVLGSAPGWDERTVSEMHTILRRWTFSQPLEALGLLTSSFPDQEIRKVAVQQLDNLLNDELLEYLPQLVQAVKFEWNLESPLVQLLLHRSLQSIQVAHRLYWLLKNAENEAYFKSWYQKLLAALQFCAGKALNDEFSKEQKLIKILGDIGERVKSASDHQRQEVLKKEIGRLEEFFQDVNTCHLPLNPALCIKGIDHDACSYFTSNALPLKITFINANPMGKNISIIFKAGDDLRQDMLVLQLIQVMDNIWLQEGLDMQMIIYRCLSTGKDQGLVQMVPDAVTLAKIHRHSGLIGPLKENTIKKWFSQHNHLKADYEKALRNFFYSCAGWCVVTFILGVCDRHNDNIMLTKSGHMFHIDFGKFLGHAQTFGGIKRDRAPFIFTSEMEYFITEGGKNPQHFQDFVELCCRAYNIIRKHSQLLLNLLEMMLYAGLPELSGIQDLKYVYNNLRPQDTDLEATSHFTKKIKESLECFPVKLNNLIHTLAQMSAISPAKSTSQTFPQESCLLSTTRSIERATILGFSKKSSNLYLIQVTHSNNETSLTEKSFEQFSKLHSQLQKQFASLTLPEFPHWWHLPFTNSDHRRFRDLNHYMEQILNVSHEVTNSDCVLSFFLSEAVQQTVEESSPVYLGEKFPDKKPKVQLVISYEDVKLTILVKHMKNIHLPDGSAPSAHVEFYLLPYPSEVRRRKTKSVPKCTDPTYNEIVVYDEVTELQGHVLMLIVKSKTVFVGAINIRLCSVPLDKEKWYPLGNSII.

Residues 285–371 (KTKFNIHIFI…IQLHLQKSRE (87 aa)) enclose the PI3K-RBD domain. In terms of domain architecture, C2 PI3K-type spans 521-669 (LPSHLSFTVY…SPVTLQIDFP (149 aa)). A PIK helical domain is found at 684-860 (RSNLEEPLKE…QKLLAALQFC (177 aa)). One can recognise a PI3K/PI4K catalytic domain in the interval 929 to 1207 (DHDACSYFTS…KIKESLECFP (279 aa)). The interval 935 to 941 (YFTSNAL) is G-loop. The interval 1071-1079 (GVCDRHNDN) is catalytic loop. The segment at 1090 to 1116 (HIDFGKFLGHAQTFGGIKRDRAPFIFT) is activation loop. Positions 1240–1352 (LSTTRSIERA…SFFLSEAVQQ (113 aa)) constitute a PX domain. Positions 1369–1486 (KKPKVQLVIS…KWYPLGNSII (118 aa)) constitute a C2 domain.

This sequence belongs to the PI3/PI4-kinase family. In terms of tissue distribution, highly expressed in liver, prostate and testis. Lower levels in small intestine, kidney and pancreas.

The protein localises to the membrane. It carries out the reaction a 1,2-diacyl-sn-glycero-3-phospho-(1D-myo-inositol 4-phosphate) + ATP = a 1,2-diacyl-sn-glycero-3-phospho-(1D-myo-inositol-3,4-bisphosphate) + ADP + H(+). The enzyme catalyses a 1,2-diacyl-sn-glycero-3-phospho-(1D-myo-inositol) + ATP = a 1,2-diacyl-sn-glycero-3-phospho-(1D-myo-inositol-3-phosphate) + ADP + H(+). In terms of biological role, generates phosphatidylinositol 3-phosphate (PtdIns3P) and phosphatidylinositol 3,4-bisphosphate (PtdIns(3,4)P2) that act as second messengers. May play a role in SDF1A-stimulated chemotaxis. The polypeptide is Phosphatidylinositol 3-kinase C2 domain-containing subunit gamma (PIK3C2G) (Homo sapiens (Human)).